A 495-amino-acid polypeptide reads, in one-letter code: Nitrogen fixation regulatory protein (495 aa).

One can recognise a PAS 1 domain in the interval 23 to 93 (HPGLFFTMVE…QEMWQTLLQR (71 aa)). Residues 94 to 148 (QPWRGQLINQARDGGLYLVDIDITPVLNPQGELEHYLAMQRDISVSYTLEQRLRN) enclose the PAC domain. The 24-residue stretch at 151 to 174 (TLMEAVLNNIPAAVVVVDEQDRVV) folds into the PAS 2; truncated domain.

FAD serves as cofactor.

Required for the inhibition of NifA activity in response to oxygen and low level of fixed nitrogen. The sequence is that of Nitrogen fixation regulatory protein (nifL) from Klebsiella pneumoniae.